The sequence spans 127 residues: D-ribose pyranase (127 aa).

The active-site Proton donor is the His20. Substrate is bound by residues Asp28, His94, and 116–118 (YSN).

It belongs to the RbsD / FucU family. RbsD subfamily. Homodecamer.

Its subcellular location is the cytoplasm. It catalyses the reaction beta-D-ribopyranose = beta-D-ribofuranose. It participates in carbohydrate metabolism; D-ribose degradation; D-ribose 5-phosphate from beta-D-ribopyranose: step 1/2. Functionally, catalyzes the interconversion of beta-pyran and beta-furan forms of D-ribose. In Cutibacterium acnes (strain DSM 16379 / KPA171202) (Propionibacterium acnes), this protein is D-ribose pyranase.